A 217-amino-acid polypeptide reads, in one-letter code: Large ribosomal subunit protein uL1 (217 aa).

Belongs to the universal ribosomal protein uL1 family. As to quaternary structure, part of the 50S ribosomal subunit.

Binds directly to 23S rRNA. Probably involved in E site tRNA release. Its function is as follows. Protein L1 is also a translational repressor protein, it controls the translation of its operon by binding to its mRNA. The protein is Large ribosomal subunit protein uL1 of Hyperthermus butylicus (strain DSM 5456 / JCM 9403 / PLM1-5).